A 406-amino-acid polypeptide reads, in one-letter code: Tryptophan synthase beta chain (406 aa).

The residue at position 99 (Lys99) is an N6-(pyridoxal phosphate)lysine.

Belongs to the TrpB family. Tetramer of two alpha and two beta chains. The cofactor is pyridoxal 5'-phosphate.

The enzyme catalyses (1S,2R)-1-C-(indol-3-yl)glycerol 3-phosphate + L-serine = D-glyceraldehyde 3-phosphate + L-tryptophan + H2O. The protein operates within amino-acid biosynthesis; L-tryptophan biosynthesis; L-tryptophan from chorismate: step 5/5. In terms of biological role, the beta subunit is responsible for the synthesis of L-tryptophan from indole and L-serine. The chain is Tryptophan synthase beta chain from Phenylobacterium zucineum (strain HLK1).